The sequence spans 464 residues: UDP-N-acetylmuramate--L-alanine ligase (464 aa).

Residue 123-129 coordinates ATP; that stretch reads GTHGKTT.

The protein belongs to the MurCDEF family.

It is found in the cytoplasm. It carries out the reaction UDP-N-acetyl-alpha-D-muramate + L-alanine + ATP = UDP-N-acetyl-alpha-D-muramoyl-L-alanine + ADP + phosphate + H(+). The protein operates within cell wall biogenesis; peptidoglycan biosynthesis. In terms of biological role, cell wall formation. In Carboxydothermus hydrogenoformans (strain ATCC BAA-161 / DSM 6008 / Z-2901), this protein is UDP-N-acetylmuramate--L-alanine ligase.